We begin with the raw amino-acid sequence, 357 residues long: P2Y purinoceptor 8 (357 aa).

Over 1 to 26 the chain is Extracellular; the sequence is MVKNGSHLDAETLAMLQNKAISITLP. N-linked (GlcNAc...) asparagine glycosylation is present at N4. Residues 27 to 47 traverse the membrane as a helical segment; the sequence is VVYTMVAIISIPGNFFSLWVL. The Cytoplasmic portion of the chain corresponds to 48-56; that stretch reads CWHIKPKTP. The chain crosses the membrane as a helical span at residues 57 to 77; it reads SVIFMINLSITDLLLACCFPF. The Extracellular portion of the chain corresponds to 78 to 97; it reads QIFYHIQRNHWIFGKTLCSL. Cysteines 95 and 174 form a disulfide. A helical transmembrane segment spans residues 98 to 118; the sequence is VTVMFYSNMYSSILTMTCISI. Over 119 to 137 the chain is Cytoplasmic; the sequence is ERYMGVVYPMKLIKWRRKR. Residues 138–158 traverse the membrane as a helical segment; it reads YALGACVIMWIFLLLAFYPLE. Topologically, residues 159 to 185 are extracellular; sequence STDLTYEVKELGIITCFDVLKWEMLPN. A helical transmembrane segment spans residues 186–206; that stretch reads FAAWVAFLLTLFVVLFLIPFI. Residues 207–236 are Cytoplasmic-facing; it reads VTVGCYIGTIRKLIQTSSRYGNKQKTRSIY. Residues 237-257 form a helical membrane-spanning segment; sequence LAIIVLSVFITCFAPNNFILL. Residues 258 to 271 are Extracellular-facing; that stretch reads AHMIVRLFYEGSLY. Residues 272 to 294 form a helical membrane-spanning segment; that stretch reads PAYKLTLCLSCLNNCIDPFIYYF. At 295-357 the chain is on the cytoplasmic side; the sequence is ASKEFYQKFM…ICLQRQESVF (63 aa).

This sequence belongs to the G-protein coupled receptor 1 family.

It localises to the cell membrane. In terms of biological role, probable receptor for purines coupled to G-proteins. In Gallus gallus (Chicken), this protein is P2Y purinoceptor 8 (P2RY8).